The chain runs to 589 residues: Aspartate--tRNA(Asp/Asn) ligase (589 aa).

E172 contributes to the L-aspartate binding site. The segment at 196 to 199 is aspartate; sequence QLFK. R218 lines the L-aspartate pocket. Residues 218–220 and Q227 contribute to the ATP site; that span reads RDE. H449 is an L-aspartate binding site. Position 483 (E483) interacts with ATP. Residue R490 participates in L-aspartate binding. Residue 535 to 538 participates in ATP binding; it reads GVDR.

The protein belongs to the class-II aminoacyl-tRNA synthetase family. Type 1 subfamily. As to quaternary structure, homodimer.

It is found in the cytoplasm. It catalyses the reaction tRNA(Asx) + L-aspartate + ATP = L-aspartyl-tRNA(Asx) + AMP + diphosphate. Aspartyl-tRNA synthetase with relaxed tRNA specificity since it is able to aspartylate not only its cognate tRNA(Asp) but also tRNA(Asn). Reaction proceeds in two steps: L-aspartate is first activated by ATP to form Asp-AMP and then transferred to the acceptor end of tRNA(Asp/Asn). The protein is Aspartate--tRNA(Asp/Asn) ligase of Francisella philomiragia subsp. philomiragia (strain ATCC 25017 / CCUG 19701 / FSC 153 / O#319-036).